The primary structure comprises 282 residues: Tryptophan 2,3-dioxygenase (282 aa).

Substrate contacts are provided by residues 51–55 (FIIQH), Tyr-113, and Arg-117. His-240 contacts heme. Thr-254 is a binding site for substrate.

It belongs to the tryptophan 2,3-dioxygenase family. As to quaternary structure, homotetramer. Requires heme as cofactor.

It catalyses the reaction L-tryptophan + O2 = N-formyl-L-kynurenine. The protein operates within amino-acid degradation; L-tryptophan degradation via kynurenine pathway; L-kynurenine from L-tryptophan: step 1/2. In terms of biological role, heme-dependent dioxygenase that catalyzes the oxidative cleavage of the L-tryptophan (L-Trp) pyrrole ring and converts L-tryptophan to N-formyl-L-kynurenine. Catalyzes the oxidative cleavage of the indole moiety. The protein is Tryptophan 2,3-dioxygenase of Polaromonas naphthalenivorans (strain CJ2).